Reading from the N-terminus, the 401-residue chain is Probable aspartate/prephenate aminotransferase (401 aa).

L-aspartate is bound by residues Gly39, Trp125, and Asn175. Lys239 is modified (N6-(pyridoxal phosphate)lysine). Arg375 is a binding site for L-aspartate.

It belongs to the class-I pyridoxal-phosphate-dependent aminotransferase family. As to quaternary structure, homodimer. Pyridoxal 5'-phosphate is required as a cofactor.

The protein localises to the cytoplasm. It catalyses the reaction L-aspartate + 2-oxoglutarate = oxaloacetate + L-glutamate. The enzyme catalyses L-arogenate + 2-oxoglutarate = prephenate + L-glutamate. Catalyzes the reversible conversion of aspartate and 2-oxoglutarate to glutamate and oxaloacetate. Can also transaminate prephenate in the presence of glutamate. This is Probable aspartate/prephenate aminotransferase (aatA) from Rickettsia conorii (strain ATCC VR-613 / Malish 7).